The sequence spans 131 residues: Large ribosomal subunit protein uL22c (131 aa).

The protein belongs to the universal ribosomal protein uL22 family. Part of the 50S ribosomal subunit.

It is found in the plastid. In terms of biological role, this protein binds specifically to 23S rRNA. Functionally, the globular domain of the protein is located near the polypeptide exit tunnel on the outside of the subunit, while an extended beta-hairpin is found that lines the wall of the exit tunnel in the center of the 70S ribosome. In Aneura mirabilis (Parasitic liverwort), this protein is Large ribosomal subunit protein uL22c (rpl22).